The primary structure comprises 307 residues: L-carnitine dehydrogenase (307 aa).

Residue 8–13 participates in NAD(+) binding; sequence GTGVIG.

It belongs to the 3-hydroxyacyl-CoA dehydrogenase family. L-carnitine dehydrogenase subfamily. As to quaternary structure, homodimer.

It localises to the cytoplasm. It catalyses the reaction carnitine + NAD(+) = 3-dehydrocarnitine + NADH + H(+). Its pathway is amine and polyamine metabolism; carnitine metabolism. Its function is as follows. Catalyzes the NAD(+)-dependent oxidation of L-carnitine to 3-dehydrocarnitine. The polypeptide is L-carnitine dehydrogenase (Oceanobacillus iheyensis (strain DSM 14371 / CIP 107618 / JCM 11309 / KCTC 3954 / HTE831)).